A 254-amino-acid polypeptide reads, in one-letter code: Leucyl/phenylalanyl-tRNA--protein transferase (254 aa).

The protein belongs to the L/F-transferase family.

The protein resides in the cytoplasm. The enzyme catalyses N-terminal L-lysyl-[protein] + L-leucyl-tRNA(Leu) = N-terminal L-leucyl-L-lysyl-[protein] + tRNA(Leu) + H(+). It catalyses the reaction N-terminal L-arginyl-[protein] + L-leucyl-tRNA(Leu) = N-terminal L-leucyl-L-arginyl-[protein] + tRNA(Leu) + H(+). The catalysed reaction is L-phenylalanyl-tRNA(Phe) + an N-terminal L-alpha-aminoacyl-[protein] = an N-terminal L-phenylalanyl-L-alpha-aminoacyl-[protein] + tRNA(Phe). Functionally, functions in the N-end rule pathway of protein degradation where it conjugates Leu, Phe and, less efficiently, Met from aminoacyl-tRNAs to the N-termini of proteins containing an N-terminal arginine or lysine. In Burkholderia cenocepacia (strain ATCC BAA-245 / DSM 16553 / LMG 16656 / NCTC 13227 / J2315 / CF5610) (Burkholderia cepacia (strain J2315)), this protein is Leucyl/phenylalanyl-tRNA--protein transferase.